The sequence spans 545 residues: Delta 8-(E)-sphingolipid desaturase (545 aa).

Residues 1–82 (MASHTKDALL…MLAFQIGRIQ (82 aa)) form the Cytochrome b5 heme-binding domain. Histidine 42 and histidine 65 together coordinate heme. Residues 97–124 (FRHYDENADSEEDDTSGQSQPPSPIFDA) form a disordered region. A helical transmembrane segment spans residues 227–247 (LGWYSVSAVFLGCFWHQLVFS). Residues 249–253 (HDAGH) carry the Histidine box-1 motif. A helical membrane pass occupies residues 262–282 (VDSIIGILIADFLGGLSLGWW). The Histidine box-2 motif lies at 286-290 (HNVHH). 2 helical membrane-spanning segments follow: residues 382-402 (IAGQ…CSIP) and 408-428 (LSFL…ITLS). The Histidine box-3 motif lies at 470 to 474 (QAIHH).

It belongs to the fatty acid desaturase type 1 family.

The protein localises to the membrane. It carries out the reaction an N-acylsphing-4-enine + 2 Fe(II)-[cytochrome b5] + O2 + 2 H(+) = a (4E,8E)-4-sphinga-4,8-dienine ceramide + 2 Fe(III)-[cytochrome b5] + 2 H2O. It participates in lipid metabolism; sphingolipid metabolism. Delta(8)-fatty-acid desaturase which introduces a double bond at the 8-position in the long-chain base (LCB) of ceramides. Required for the formation of the di-unsaturated sphingoid base (E,E)-sphinga-4,8-dienine during glucosylceramide (GluCer) biosynthesis. Plays an important role in conidiation. This chain is Delta 8-(E)-sphingolipid desaturase, found in Emericella nidulans (strain FGSC A4 / ATCC 38163 / CBS 112.46 / NRRL 194 / M139) (Aspergillus nidulans).